The following is a 423-amino-acid chain: G-protein coupled receptor 83 (423 aa).

A signal peptide spans 1 to 16 (MVPHLLLLCLLPLVRA). Over 18 to 71 (EPHEGRADEQSAEAALAVPNASHFFSWNNYTFSDWQNFVGRRRYGAESQNPTVK) the chain is Extracellular. Residues asparagine 37 and asparagine 46 are each glycosylated (N-linked (GlcNAc...) asparagine). A helical transmembrane segment spans residues 72-92 (ALLIVAYSFIIVFSLFGNVLV). Topologically, residues 93–107 (CHVIFKNQRMHSATS) are cytoplasmic. The chain crosses the membrane as a helical span at residues 108 to 129 (LFIVNLAVADIMITLLNTPFTL). Topologically, residues 130-145 (VRFVNSTWIFGKGMCH) are extracellular. N-linked (GlcNAc...) asparagine glycosylation is present at asparagine 134. A disulfide bond links cysteine 144 and cysteine 224. Residues 146–167 (VSRFAQYCSLHVSALTLTAIAV) form a helical membrane-spanning segment. Residues 168-186 (DRHQVIMHPLKPRISITKG) lie on the Cytoplasmic side of the membrane. A helical transmembrane segment spans residues 187–208 (VIYIAVIWTMATFFSLPHAICQ). At 209–238 (KLFTFKYSEDIVRSLCLPDFPEPADLFWKY) the chain is on the extracellular side. A helical membrane pass occupies residues 239-260 (LDLATFILLYILPLLIISVAYA). The Cytoplasmic portion of the chain corresponds to 261–293 (RVAKKLWLCNMIGDVTTEQYFALRRKKKKTIKM). The helical transmembrane segment at 294–315 (LMLVVVLFALCWFPLNCYVLLL) threads the bilayer. Over 316–327 (SSKVIRTNNALY) the chain is Extracellular. A helical transmembrane segment spans residues 328-348 (FAFHWFAMSSTCYNPFIYCWL). The Cytoplasmic portion of the chain corresponds to 349 to 423 (NENFRIELKA…SSVEPIVTMS (75 aa)). The span at 402-414 (PTSQLQSGKTDLS) shows a compositional bias: polar residues. The disordered stretch occupies residues 402 to 423 (PTSQLQSGKTDLSSVEPIVTMS).

Belongs to the G-protein coupled receptor 1 family. As to expression, highly expressed in the brain and spinal cord, and found in lower concentrations in the thymus and other tissues.

It localises to the cell membrane. Its function is as follows. G-protein coupled receptor for PEN, a neuropeptide produced from the precursor protein, proSAAS (encoded by PCSK1N). Acts through a G(i)- and G(q)-alpha-alpha-mediated pathway in response to PEN. Plays a role in food intake and body weight regulation. May contribute to the regulation of anxiety-related behaviors. This Homo sapiens (Human) protein is G-protein coupled receptor 83.